A 458-amino-acid polypeptide reads, in one-letter code: Cysteine--tRNA ligase (458 aa).

Zn(2+) is bound at residue Cys29. A 'HIGH' region motif is present at residues 31–41 (PTVYDNPHIGN). Positions 214, 239, and 243 each coordinate Zn(2+). Positions 272-276 (KMSKS) match the 'KMSKS' region motif. Residue Lys275 participates in ATP binding.

This sequence belongs to the class-I aminoacyl-tRNA synthetase family. In terms of assembly, monomer. Zn(2+) is required as a cofactor.

It is found in the cytoplasm. The catalysed reaction is tRNA(Cys) + L-cysteine + ATP = L-cysteinyl-tRNA(Cys) + AMP + diphosphate. In Rickettsia bellii (strain OSU 85-389), this protein is Cysteine--tRNA ligase.